The chain runs to 61 residues: Insect toxin BsIT2 (61 aa).

The 61-residue stretch at 1–61 (DGYIKKSKGC…RWKYETKTCK (61 aa)) folds into the LCN-type CS-alpha/beta domain. 4 cysteine pairs are disulfide-bonded: Cys-10-Cys-60, Cys-14-Cys-35, Cys-21-Cys-42, and Cys-25-Cys-44.

It belongs to the long (4 C-C) scorpion toxin superfamily. Sodium channel inhibitor family. Beta subfamily. Expressed by the venom gland.

Its subcellular location is the secreted. Functionally, depressant insect beta-toxins cause a transient contraction paralysis followed by a slow flaccid paralysis. They bind voltage-independently at site-4 of sodium channels (Nav) and shift the voltage of activation toward more negative potentials thereby affecting sodium channel activation and promoting spontaneous and repetitive firing. This toxin is active only on insects. This is Insect toxin BsIT2 from Hottentotta tamulus sindicus (Scorpion).